A 150-amino-acid chain; its full sequence is MKKLTKVLLVAGSVAVLAACGSSKKDESAGQMFGGYSVQDLQQRYNTVYFGFDKYNIEGEYVQILDAHAAFLNATPATKVVVEGNTDERGTPEYNIALGQRRADAVKHYLSAKGVQAGQVSTVSYGEEKPAVLGHDEAAYSKNRRAVLAY.

The N-terminal stretch at 1–19 (MKKLTKVLLVAGSVAVLAA) is a signal peptide. Cys-20 carries N-palmitoyl cysteine lipidation. Cys-20 carries the S-diacylglycerol cysteine lipid modification. Residues 37-150 (SVQDLQQRYN…SKNRRAVLAY (114 aa)) enclose the OmpA-like domain.

It belongs to the Pal lipoprotein family. The Tol-Pal system is composed of five core proteins: the inner membrane proteins TolA, TolQ and TolR, the periplasmic protein TolB and the outer membrane protein Pal. They form a network linking the inner and outer membranes and the peptidoglycan layer.

The protein localises to the cell outer membrane. Functionally, part of the Tol-Pal system, which plays a role in outer membrane invagination during cell division and is important for maintaining outer membrane integrity. The sequence is that of Peptidoglycan-associated lipoprotein from Pasteurella multocida (strain Pm70).